The sequence spans 358 residues: Histidinol-phosphate aminotransferase (358 aa).

The residue at position 211 (lysine 211) is an N6-(pyridoxal phosphate)lysine.

Belongs to the class-II pyridoxal-phosphate-dependent aminotransferase family. Histidinol-phosphate aminotransferase subfamily. In terms of assembly, homodimer. Requires pyridoxal 5'-phosphate as cofactor.

The enzyme catalyses L-histidinol phosphate + 2-oxoglutarate = 3-(imidazol-4-yl)-2-oxopropyl phosphate + L-glutamate. Its pathway is amino-acid biosynthesis; L-histidine biosynthesis; L-histidine from 5-phospho-alpha-D-ribose 1-diphosphate: step 7/9. The chain is Histidinol-phosphate aminotransferase from Blochmanniella pennsylvanica (strain BPEN).